Consider the following 572-residue polypeptide: Putative acyl-CoA synthetase CCNA_01223 (572 aa).

The protein belongs to the ATP-dependent AMP-binding enzyme family.

It functions in the pathway lipid metabolism; sphingolipid metabolism. Involved in de novo bacterial ceramide synthesis. The polypeptide is Putative acyl-CoA synthetase CCNA_01223 (Caulobacter vibrioides (strain NA1000 / CB15N) (Caulobacter crescentus)).